The primary structure comprises 135 residues: Ribonuclease VapC35 (135 aa).

A PINc domain is found at 2-123; that stretch reads IYLETSALVK…DNRLKEAAEA (122 aa). E5 and D91 together coordinate Mg(2+).

The protein belongs to the PINc/VapC protein family. It depends on Mg(2+) as a cofactor.

In terms of biological role, toxic component of a type II toxin-antitoxin (TA) system. An RNase. Its toxic effect is neutralized by coexpression with cognate antitoxin VapB35. In Mycobacterium tuberculosis (strain CDC 1551 / Oshkosh), this protein is Ribonuclease VapC35.